Consider the following 510-residue polypeptide: Cytochrome P450 90D2 (510 aa).

The chain crosses the membrane as a helical span at residues 6–26 (MVGSGGVYSWPAALLVAAIVV). Cys-444 serves as a coordination point for heme.

This sequence belongs to the cytochrome P450 family. It depends on heme as a cofactor.

The protein resides in the membrane. The enzyme catalyses 3-epi-6-deoxocathasterone + reduced [NADPH--hemoprotein reductase] + O2 = 6-deoxotyphasterol + oxidized [NADPH--hemoprotein reductase] + H2O + H(+). It catalyses the reaction (22S,24R)-22-hydroxy-5alpha-ergostan-3-one + reduced [NADPH--hemoprotein reductase] + O2 = 3-dehydro-6-deoxoteasterone + oxidized [NADPH--hemoprotein reductase] + H2O + H(+). The catalysed reaction is 6-deoxycathasterone + reduced [NADPH--hemoprotein reductase] + O2 = 6-deoxoteasterone + oxidized [NADPH--hemoprotein reductase] + H2O + H(+). The protein operates within plant hormone biosynthesis; brassinosteroid biosynthesis. Functionally, involved in reduction steps of the biosynthesis of plant campesterol-derivative steroids, ending to castasterone (CS) but missing brassinolide (BL). Catalyzes the conversion of (22S,24R)-22-hydroxy-5alpha-ergostan-3-one (22-hydroxy-campesta-3-one, 22-OH-3-one) to 3-dehydro-6-deoxoteasterone (6-deoxo3DT, 6-deoxo-3-DHT), 3-epi-6-deoxocathasterone (3-epi-6-deoxoCT) to 6-deoxotyphasterol (6-deoxoTY) and of 6-deoxocathasterone (6-deoxoCT) to 6-deoxoteasterone (6-deoxoTE). The polypeptide is Cytochrome P450 90D2 (Brachypodium distachyon (Purple false brome)).